The following is a 310-amino-acid chain: Isoaspartyl peptidase/L-asparaginase (310 aa).

Catalysis depends on threonine 167, which acts as the Nucleophile. Residues 195–198 (RVGD) and 218–221 (TGHG) contribute to the substrate site.

The protein belongs to the Ntn-hydrolase family. As to quaternary structure, heterodimer of an alpha and beta chain produced by autocleavage. In terms of processing, cleaved into an alpha and beta chain by autocatalysis; this activates the enzyme. The N-terminal residue of the beta subunit is responsible for the nucleophile hydrolase activity.

The protein localises to the cytoplasm. It catalyses the reaction L-asparagine + H2O = L-aspartate + NH4(+). The catalysed reaction is Cleavage of a beta-linked Asp residue from the N-terminus of a polypeptide.. Has both L-asparaginase and beta-aspartyl peptidase activity. Does not have aspartylglucosaminidase activity and is inactive toward GlcNAc-L-Asn. Likewise, has no activity toward glutamine. The protein is Isoaspartyl peptidase/L-asparaginase (asrgl1) of Danio rerio (Zebrafish).